Consider the following 122-residue polypeptide: Large ribosomal subunit protein uL14 (122 aa).

It belongs to the universal ribosomal protein uL14 family. Part of the 50S ribosomal subunit. Forms a cluster with proteins L3 and L19. In the 70S ribosome, L14 and L19 interact and together make contacts with the 16S rRNA in bridges B5 and B8.

Functionally, binds to 23S rRNA. Forms part of two intersubunit bridges in the 70S ribosome. The sequence is that of Large ribosomal subunit protein uL14 from Microcystis aeruginosa (strain NIES-843 / IAM M-2473).